A 46-amino-acid polypeptide reads, in one-letter code: Cystatin WCPI-3 (46 aa).

A Secondary area of contact motif is present at residues 35 to 38 (VVAG).

It belongs to the cystatin family. Phytocystatin subfamily.

In terms of biological role, inhibitor of papain. The chain is Cystatin WCPI-3 from Wisteria floribunda (Japanese wisteria).